A 988-amino-acid chain; its full sequence is MVPKSDQLLIVVSILEGRHFPKRPKHLLVVEAKFDGEQLATDPVDHTDQPEFATELAWEIDRKVLHQHRLQRTPIKLQCFALDPQTSAKETVGYIVLDLRTAQETKQAPKWYQLLSNKYTKFKAEVQISLTLETDTKAQVDSYKAKAAPPRDGKVLASLAGVDPKDIVAVLNEEGGYHQIGPAEHCTDPFILSVTIAFATQLEQLIPCTMKLPERQPEFFFYYSLLGNDVTNEPFSDLINPNFEPERASVRIRSSVEILRVYLALHSKLQIHLCCGDQSLGSTEIPLNGLLKKGSTEINQHPVTVEGAFTLDPPNRAKQKLAPVPLDLAPTVGVSVALQREGIDSQSLIELKTQNGHEAEHSQKRVLTPIKEKTLTGPKSPRESPAPPPPPNQTPPTKDDATESEVESLQYDKDPKPTVKGIGSVPASLAQPEATCGASEVVTSGQKIAVPAASHHFCFSVDLRSVHDLELSFPVNCILRYSYPFFGSAAPIMTNPPVEVRKNMEVFLPQSYCAFDFATMPHQLQDTFLRIPLLVELWHKDKMSKDLLLGVARIQLSNILSSEKTRFLGANGEQCWRQTYSESVPVIAAQGSNNRILDLSYTMTLEDYGLVKMREIFVSESSQGVPAVDQKPSSPPPAPCPSEIQMEPRETLEYKAALELEMWKEMQEDIFESQLKQKELAHMQALAEEWKKRDRERESLVKKKVAEYSILEGKLQKALTELETREQQLASAEAELQRERKELQLERERNLQELQDSVRRARDDCVYQVELERLKLKQLEEDKQRLQQQLNDAGNKYKTLEKEFQQFKDQQNNKPEIRLQSEINLLTLEKVELERKLESATKSKLHYKQQWGRALKELARLKQREQESQMARLKKQQEELEQMRLRYLAAEEKETVRTEQQELLDIRNELNRLRQQEQNQYQDCKEIASGKLGSPRGSGLEEGLDDYLTRLIEERDTLMRTGVYNHEDRIISELDRQIREVLTKNSAS.

Residues 1–112 form the C2 1 domain; sequence MVPKSDQLLI…QETKQAPKWY (112 aa). Residues 354–425 are disordered; the sequence is QNGHEAEHSQ…KPTVKGIGSV (72 aa). A compositionally biased stretch (pro residues) spans 384–394; it reads SPAPPPPPNQT. A C2 2 domain is found at 435–569; sequence TCGASEVVTS…LSSEKTRFLG (135 aa). The segment at 624–644 is disordered; it reads GVPAVDQKPSSPPPAPCPSEI. Positions 706-929 form a coiled coil; the sequence is AEYSILEGKL…QYQDCKEIAS (224 aa). Phosphoserine is present on residues serine 934 and serine 938.

Belongs to the CEP120 family. Interacts with TACC2, TACC3, CCDC52, TALPID3. As to expression, ubiquitous. Highly expressed in brain, lung and kidney and weakly expressed in heart, liver, small intestine and limb (at protein level). Expressed in brain.

It is found in the cytoplasm. It localises to the cytoskeleton. The protein resides in the microtubule organizing center. The protein localises to the centrosome. Plays a role in the microtubule-dependent coupling of the nucleus and the centrosome. Involved in the processes that regulate centrosome-mediated interkinetic nuclear migration (INM) of neural progenitors and for proper positioning of neurons during brain development. Also implicated in the migration and selfrenewal of neural progenitors. Required for centriole duplication and maturation during mitosis and subsequent ciliogenesis. Required for the recruitment of CEP295 to the proximal end of new-born centrioles at the centriolar microtubule wall during early S phase in a PLK4-dependent manner. The chain is Centrosomal protein of 120 kDa (Cep120) from Mus musculus (Mouse).